The following is a 198-amino-acid chain: Recombination protein RecR (198 aa).

The segment at Cys-56–Cys-71 adopts a C4-type zinc-finger fold. In terms of domain architecture, Toprim spans Gly-79–Pro-174.

This sequence belongs to the RecR family.

In terms of biological role, may play a role in DNA repair. It seems to be involved in an RecBC-independent recombinational process of DNA repair. It may act with RecF and RecO. The chain is Recombination protein RecR from Tropheryma whipplei (strain Twist) (Whipple's bacillus).